We begin with the raw amino-acid sequence, 731 residues long: MSDLKCPFSGHTGAVTPAGNTNNGDWWPNQINLGILHQHHPASNPLGDAFDYPTAFASLDYSALKADLQTLMTDSQDWWPADWGHYGALFIRLAWHSAGTYRTGDGRGGAGHGNQRFAPLNSWPDNTNLDKARRLLWPIKRKYGNAISWADLIILSGNVALESMGFRTFGFAGGREDIWQPEEDVFWGKETGWLKDERRNDKGELNQPLAAVEMGLIYVNPEGPHGEPDPVASGRDVRETFARMGMTVEETVALVAGGHTFGKCHGAAPDSHLEAEPEGAALHEQGLGWRNTYESGKGEHTITSGIEGAWKPNPTRWDQGYFQMMFTYEWELTKSPAGAWQWTAKDVKPEHMIPDAHVAGKSSAPIMTTADLSLRHDAIMEPVARRFHLDQEAFADAFARAWFKLTHRDLGPRALYLGPDVPEEVQIWQDPVPPVTHPLIDEAEISTLKQQILASGQSVSALVAAAWGSASTFRGSDRRGGANGGRIRLLPQRTWEVNDPEQLNGVLTALETIQSQFNSSSSNGKSVSIADLIVLGGCAAVEKAAADGGHTVVVPFRPGRSDAGPEQTDTASFNVLKPLADGFRNWQRSGLPLRAEELLVDRAQLLTLSAPEMTVLLAGLRVMGANTAGNRQGVFTQNVGVLSNDFCVNLLDMTTRWTPTSEAQDAYIGRDSATGAERWSASRADLVFGSNSQLRAIVEVYAQNDGGSRFVADFVKAWVKVMELDRFDLRS.

Residues 1 to 23 are disordered; it reads MSDLKCPFSGHTGAVTPAGNTNN. The segment at residues 95–218 is a cross-link (tryptophyl-tyrosyl-methioninium (Trp-Tyr) (with M-244)); sequence WHSAGTYRTG…LAAVEMGLIY (124 aa). Histidine 96 (proton acceptor) is an active-site residue. The tryptophyl-tyrosyl-methioninium (Tyr-Met) (with W-95) cross-link spans 218-244; it reads YVNPEGPHGEPDPVASGRDVRETFARM. Histidine 259 serves as a coordination point for heme b.

It belongs to the peroxidase family. Peroxidase/catalase subfamily. As to quaternary structure, homodimer or homotetramer. Heme b is required as a cofactor. Formation of the three residue Trp-Tyr-Met cross-link is important for the catalase, but not the peroxidase activity of the enzyme.

It catalyses the reaction H2O2 + AH2 = A + 2 H2O. The catalysed reaction is 2 H2O2 = O2 + 2 H2O. Functionally, bifunctional enzyme with both catalase and broad-spectrum peroxidase activity. The polypeptide is Catalase-peroxidase (Synechococcus sp. (strain WH7803)).